The primary structure comprises 295 residues: Non-selective voltage-gated ion channel VDAC2 (295 aa).

The ATP site is built by K24 and K32. The residue at position 32 (K32) is an N6-acetyllysine; alternate. K32 bears the N6-succinyllysine; alternate mark. K32 is covalently cross-linked (Glycyl lysine isopeptide (Lys-Gly) (interchain with G-Cter in ubiquitin); alternate). A run of 2 beta stranded transmembrane segments spans residues L38 to S47 and V51 to S59. Glycyl lysine isopeptide (Lys-Gly) (interchain with G-Cter in ubiquitin) cross-links involve residues K65 and K73. The next 4 beta stranded transmembrane spans lie at V66–W76, L81–N88, T92–D101, and L107–S116. An N6-acetyllysine; alternate modification is found at K121. K121 is covalently cross-linked (Glycyl lysine isopeptide (Lys-Gly) (interchain with G-Cter in ubiquitin); alternate). Glycyl lysine isopeptide (Lys-Gly) (interchain with G-Cter in ubiquitin) cross-links involve residues K122 and K125. A run of 4 beta stranded transmembrane segments spans residues S123 to R132, I135 to D142, A149 to G157, and L162 to D170. K173 participates in a covalent cross-link: Glycyl lysine isopeptide (Lys-Gly) (interchain with G-Cter in ubiquitin). 6 consecutive transmembrane segments (beta stranded) span residues K175–T187, F190–N197, E201–V210, F214–T223, R230–L239, and A243–N250. S205 is modified (phosphoserine). Residue S252 is modified to Phosphoserine. NAD(+)-binding positions include L254–G256 and S272–D276. A run of 2 beta stranded transmembrane segments spans residues L254 to L263 and G266 to V275. K278 bears the N6-acetyllysine; alternate mark. K278 is covalently cross-linked (Glycyl lysine isopeptide (Lys-Gly) (interchain with G-Cter in ubiquitin); alternate). The chain crosses the membrane as a beta stranded span at residues H285–E294. A Glycyl lysine isopeptide (Lys-Gly) (interchain with G-Cter in ubiquitin) cross-link involves residue K286.

Belongs to the eukaryotic mitochondrial porin family. In terms of assembly, monomer, homodimer and higher order oligomers; formation of higher order structures is necessary for scramblase activity. Interacts with ARMC12 in a TBC1D21-dependent manner. Interacts with KLC3. Interacts with SPATA33. Interacts with PPP3CC in a SPATA33-dependent manner. Ubiquitinated by PRKN during mitophagy, leading to its degradation and enhancement of mitophagy. Deubiquitinated by USP30.

It localises to the mitochondrion outer membrane. Its subcellular location is the membrane. The catalysed reaction is chloride(in) = chloride(out). It carries out the reaction K(+)(in) = K(+)(out). It catalyses the reaction a 1,2-diacyl-sn-glycero-3-phospho-L-serine(in) = a 1,2-diacyl-sn-glycero-3-phospho-L-serine(out). The enzyme catalyses a 1,2-diacyl-sn-glycero-3-phosphocholine(in) = a 1,2-diacyl-sn-glycero-3-phosphocholine(out). The catalysed reaction is a 1,2-diacyl-sn-glycero-3-phospho-(1D-myo-inositol)(in) = a 1,2-diacyl-sn-glycero-3-phospho-(1D-myo-inositol)(out). In terms of biological role, non-selective voltage-gated ion channel that mediates the transport of anions and cations through the mitochondrion outer membrane and plasma membrane. The channel adopts an open conformation at zero mV and a closed conformation at both positive and negative potentials. There are two populations of channels; the main that functions in a lower open-state conductance with lower ion selectivity, that switch, in a voltage-dependent manner, from the open to a low-conducting 'closed' state and the other that has a normal ion selectivity in the typical high conductance, 'open' state. Binds various lipids, including the sphingolipid ceramide, the phospholipid phosphatidylcholine, and the sterols cholesterol and oxysterol. Binding of ceramide promotes the mitochondrial outer membrane permeabilization (MOMP) apoptotic pathway. Its function is as follows. Catalyzes the scrambling of phospholipids across the outer mitochondrial membrane; the mechanism is unrelated to channel activity and is capable of translocating both anionic and zwitterionic phospholipids. The polypeptide is Non-selective voltage-gated ion channel VDAC2 (Mesocricetus auratus (Golden hamster)).